The following is a 226-amino-acid chain: Leucyl/phenylalanyl-tRNA--protein transferase (226 aa).

Belongs to the L/F-transferase family.

It localises to the cytoplasm. It carries out the reaction N-terminal L-lysyl-[protein] + L-leucyl-tRNA(Leu) = N-terminal L-leucyl-L-lysyl-[protein] + tRNA(Leu) + H(+). The catalysed reaction is N-terminal L-arginyl-[protein] + L-leucyl-tRNA(Leu) = N-terminal L-leucyl-L-arginyl-[protein] + tRNA(Leu) + H(+). It catalyses the reaction L-phenylalanyl-tRNA(Phe) + an N-terminal L-alpha-aminoacyl-[protein] = an N-terminal L-phenylalanyl-L-alpha-aminoacyl-[protein] + tRNA(Phe). Its function is as follows. Functions in the N-end rule pathway of protein degradation where it conjugates Leu, Phe and, less efficiently, Met from aminoacyl-tRNAs to the N-termini of proteins containing an N-terminal arginine or lysine. The sequence is that of Leucyl/phenylalanyl-tRNA--protein transferase from Stutzerimonas stutzeri (strain A1501) (Pseudomonas stutzeri).